Here is a 402-residue protein sequence, read N- to C-terminus: Multidrug resistance protein MdtH (402 aa).

The Cytoplasmic portion of the chain corresponds to 1–12 (MSRVSQARNLGK). A helical membrane pass occupies residues 13-33 (YFLLIDNMLVVLGFFVVFPLI). The Periplasmic segment spans residues 34–98 (SIRFVDQMGW…GFATMGIAHE (65 aa)). Residues 99-116 (PWLLWFSCFLSGLGGTLF) traverse the membrane as a helical segment. The Cytoplasmic portion of the chain corresponds to 117-138 (DPPRSALVVKLIRPEQRDRFFS). A helical transmembrane segment spans residues 139–159 (LLMMQDSAGAVIGALLGSWLL). Residues 160-164 (QYDFR) are Periplasmic-facing. The helical transmembrane segment at 165–185 (LVCATGAILFILCALFNAWLL) threads the bilayer. The Cytoplasmic portion of the chain corresponds to 186–213 (PAWKLSTVRTPVREGMRRVMSDKRFVTY). The chain crosses the membrane as a helical span at residues 214-234 (VLTLAGYYMLAVQVMLMLPIM). The Periplasmic segment spans residues 235–243 (VNDIAGSPA). Residues 244-264 (AVKWMYAIEACLSLTLLYPIA) traverse the membrane as a helical segment. Residues 265–276 (RWSEKRFRLEHR) lie on the Cytoplasmic side of the membrane. A helical transmembrane segment spans residues 277–297 (LMAGLLVMSLSMLPIGMVGNL). Residues 298-299 (QQ) are Periplasmic-facing. The chain crosses the membrane as a helical span at residues 300 to 320 (LFTLICAFYIGSVIAEPARET). The Cytoplasmic portion of the chain corresponds to 321–339 (LSASLADARARGSYMGFSR). The chain crosses the membrane as a helical span at residues 340–360 (LGLAIGGAIGYIGGGWLFDMG). Residues 361–367 (KALAQPE) are Periplasmic-facing. Residues 368-388 (LPWMMLGIIGFITFLALGWQF) form a helical membrane-spanning segment. Topologically, residues 389 to 402 (SHKRTPRRMLEPGA) are cytoplasmic.

The protein belongs to the major facilitator superfamily. DHA1 family. MdtH (TC 2.A.1.2.21) subfamily.

Its subcellular location is the cell inner membrane. The chain is Multidrug resistance protein MdtH from Salmonella typhimurium (strain LT2 / SGSC1412 / ATCC 700720).